Here is a 118-residue protein sequence, read N- to C-terminus: Small ribosomal subunit protein uS13 (118 aa).

A disordered region spans residues 94–118; that stretch reads GLPVRGQRTKTNARTRKGPRKPIKK.

It belongs to the universal ribosomal protein uS13 family. Part of the 30S ribosomal subunit. Forms a loose heterodimer with protein S19. Forms two bridges to the 50S subunit in the 70S ribosome.

Functionally, located at the top of the head of the 30S subunit, it contacts several helices of the 16S rRNA. In the 70S ribosome it contacts the 23S rRNA (bridge B1a) and protein L5 of the 50S subunit (bridge B1b), connecting the 2 subunits; these bridges are implicated in subunit movement. Contacts the tRNAs in the A and P-sites. The polypeptide is Small ribosomal subunit protein uS13 (Tolumonas auensis (strain DSM 9187 / NBRC 110442 / TA 4)).